A 2535-amino-acid chain; its full sequence is Piezo-type mechanosensitive ion channel component 1 (2535 aa).

The next 3 helical transmembrane spans lie at 13–25 (LLLPCTLLAASLL), 29–44 (ALSLVYLLFLLLLPWL), and 59–81 (LLRALLCLSLLFLVAHVAFQICL). Asn100 carries an N-linked (GlcNAc...) asparagine glycan. The next 5 membrane-spanning stretches (helical) occupy residues 122–138 (VAPDLGVLVASSLCLGL), 193–212 (LLVTSGRMLVIVLLALAGIA), 215–234 (SAFSSVYLMVFLAICTWWSC), 246–266 (LCVMVSCFGAGHLVCLYCYQT), and 308–328 (WPIYVSPGILLLLYYTATSLL). Over residues 346–357 (DEEHELELDQLE) the composition is skewed to acidic residues. A disordered region spans residues 346-377 (DEEHELELDQLEPEPQARGTTQGATPTTTGPD). The span at 358 to 376 (PEPQARGTTQGATPTTTGP) shows a compositional bias: low complexity. N-linked (GlcNAc...) asparagine glycosylation occurs at Asn380. Helical transmembrane passes span 416 to 436 (LILDQSYVCALIAMMVWSIMY), 439 to 454 (WLTFVLLLWACLIWTV), 460 to 482 (LAMLCSPCILLYGLTLCCLRYVW), 510 to 527 (CLDLGAMLLYLLTFWLLL), 572 to 592 (IYVKYWIYVCAGMFIVVSFAG), 594 to 614 (LVVYKIVYMFLFLLCLTLFQV), 625 to 646 (VFWWLVVAYTMLVLIAVYTFQF), and 677 to 693 (LFSSILIPGFFLLACIL). Residue Ser749 is modified to Phosphoserine. The next 12 membrane-spanning stretches (helical) occupy residues 803 to 814 (LVALYTVWVALK), 818 to 831 (VMNLLLVVLWAFAL), 846 to 860 (VWTCIIIVCKMLYQL), 913 to 940 (GYIQNHLQILLLLVFEAVVYRRQEHYRR), 981 to 996 (GLEICFLMAVNVIGQR), 999 to 1014 (FMVILHGCWLVAILTR), 1028 to 1043 (CLFLTLFLLYQYLLCL), 1083 to 1104 (TNLISDFLLLLCASQQWQVFSA), 1140 to 1166 (YLDMLKVAVFRYLFWLVLVVVFVTGAT), 1172 to 1190 (GLGYLLACFYLLLFGTTLL), 1204 to 1222 (LILYNVTVIISKNMLSLLS), and 1272 to 1288 (IWDSICFFFLLLQRRVF). Positions 1325–1356 (HRQTEERSLAQLKRQMKRIRAKQEKYRQSQAS) form a coiled coil. Disordered stretches follow at residues 1345-1383 (AKQEKYRQSQASRGQLQSTDPQEPGPDSPGGSSPPRTQW) and 1556-1597 (SGPV…NTRS). The segment covering 1352 to 1365 (QSQASRGQLQSTDP) has biased composition (polar residues). A phosphoserine mark is found at Ser1372 and Ser1377. A compositionally biased stretch (polar residues) spans 1579-1597 (SSMTDDTGSPLSTGYNTRS). Phosphoserine is present on residues Ser1614, Ser1618, and Ser1633. 4 consecutive transmembrane segments (helical) span residues 1644–1687 (PELE…LNHM), 1692–1707 (AASLVLPVLVFLWAML), 1716–1734 (FWMTAIVFTEVMVVTKYLF), and 1767–1788 (DSYIKYDLVQLMALFFHRSQLL). 2 stretches are compositionally biased toward basic and acidic residues: residues 1801-1811 (PKDHCRSSEKD) and 1842-1867 (PKDHIQGKGSVRSKDEIQDPPEDLKP). The tract at residues 1801–1911 (PKDHCRSSEK…GREAAGRKRL (111 aa)) is disordered. Over residues 1868–1881 (QHRRHISIRFRRRK) the composition is skewed to basic residues. A run of 5 helical transmembrane segments spans residues 1965 to 1984 (YALMFLADIVDIVVIIFGFW), 2005 to 2021 (PQAFLFMLLVQFGTMVI), 2036 to 2056 (AFQVVLVVAIHLWMFFILPAV), 2065 to 2080 (AVAQLWYFVKCIYFAL), and 2181 to 2201 (GLIILFLIAIIWFPLLFMSLI). A disulfide bridge links Cys2425 with Cys2429. A helical membrane pass occupies residues 2446 to 2466 (LGFLAGYGIVGLYVSIVLVVG).

Belongs to the PIEZO (TC 1.A.75) family. Homotrimer; the homotrimer forms a propeller-shaped Piezo channel with a cation-ion conducting pore. Heterotrimeric interaction may occur between PIEZO1 and PIEZO2. Interacts with PKD2. Interacts with STOM13. Interacts with TMC1, TMC2, PCDH15 and CIB2; the interaction may be part of the MET complex. Interacts with MDFIC (via C-terminus); the interaction prolongs Piezo channel inactivation. Interacts with MDFI (via C-terminus); the interaction prolongs Piezo channel inactivation. As to expression, moderate expression in lung and kidney. Very weak expression in heart, spleen and liver.

The protein localises to the endoplasmic reticulum membrane. The protein resides in the endoplasmic reticulum-Golgi intermediate compartment membrane. It localises to the cell membrane. It is found in the cell projection. Its subcellular location is the lamellipodium membrane. It catalyses the reaction K(+)(in) = K(+)(out). It carries out the reaction Na(+)(in) = Na(+)(out). The catalysed reaction is Ca(2+)(in) = Ca(2+)(out). The enzyme catalyses Mg(2+)(in) = Mg(2+)(out). Its activity is regulated as follows. Regulated by auxillary subunits MDFIC and MDFI. Down-regulated by phosphatidylserines exposed on the cell surface. Divalent ions decrease the single-channel permeability of K(+). In terms of biological role, pore-forming subunit of the mechanosensitive non-specific cation Piezo channel required for rapidly adapting mechanically activated (MA) currents and has a key role in sensing touch and tactile pain. Piezo channels are homotrimeric three-blade propeller-shaped structures that utilize a cap-motion and plug-and-latch mechanism to gate their ion-conducting pathways. Generates currents characterized by a linear current-voltage relationship that are sensitive to ruthenium red and gadolinium. Conductance to monovalent alkali ions is highest for K(+), intermediate for Na(+) and lowest for Li(+). Divalent ions except for Mn(2+) permeate the channel but more slowly than the monovalent ions and they also reduce K(+) currents. Plays a key role in epithelial cell adhesion by maintaining integrin activation through R-Ras recruitment to the ER, most probably in its activated state, and subsequent stimulation of calpain signaling. In inner ear hair cells, PIEZO1/2 subunits may constitute part of the mechanotransducer (MET) non-selective cation channel complex where they may act as pore-forming ion-conducting component in the complex. In the kidney, may contribute to the detection of intraluminal pressure changes and to urine flow sensing. Acts as a shear-stress sensor that promotes endothelial cell organization and alignment in the direction of blood flow through calpain activation. Plays a key role in blood vessel formation and vascular structure in both development and adult physiology. Acts as a sensor of phosphatidylserine (PS) flipping at the plasma membrane and governs morphogenesis of muscle cells. In myoblasts, flippase-mediated PS enrichment at the inner leaflet of plasma membrane triggers channel activation and Ca(2+) influx followed by Rho GTPases signal transduction, leading to assembly of cortical actomyosin fibers and myotube formation. This Rattus norvegicus (Rat) protein is Piezo-type mechanosensitive ion channel component 1 (Piezo1).